Reading from the N-terminus, the 616-residue chain is MALLQISEPGLSAAPHQRRLAAGIDLGTTNSLVATVRSGQAETLADHEGRHLLPSVVHYQQQGHSVGYDARTNAALDTANTISSVKRLMGRSLADIQQRYPHLPYQFQASENGLPMIETAAGLLNPVRVSADILKALAARATEALAGELDGVVITVPAYFDDAQRQGTKDAARLAGLHVLRLLNEPTAAAIAYGLDSGQEGVIAVYDLGGGTFDISILRLSRGVFEVLATGGDSALGGDDFDHLLADYIREQADIPDRSDNRVQRELLDATIAAKIALSDADSVTVNVAGWQGEISREQFNELIAPLVKRTLLACRRALKDAGVEADEVLEVVMVGGSTRVPLVRERVGEFFGRPPLTSIDPDKVVAIGAAIQADILVGNKPDSEMLLLDVIPLSLGLETMGGLVEKVIPRNTTIPVARAQDFTTFKDGQTAMSIHVMQGERELVQDCRSLARFALRGIPALPAGGAHIRVTFQVDADGLLSVTAMEKSTGVEASIQVKPSYGLTDSEIASMIKDSMSYAEQDVKARMLAEQKVEAARVLESLHGALAADAALLSAAERQVIDNAAAHLSEVAQGDDVDAIEQAIKNVDKQTQDFAARRMDQSVRRALKGHSVDEV.

The protein belongs to the heat shock protein 70 family.

In terms of biological role, chaperone involved in the maturation of iron-sulfur cluster-containing proteins. Has a low intrinsic ATPase activity which is markedly stimulated by HscB. Involved in the maturation of IscU. The sequence is that of Chaperone protein HscA from Shigella flexneri serotype 5b (strain 8401).